Consider the following 139-residue polypeptide: Putative pre-16S rRNA nuclease (139 aa).

It belongs to the YqgF nuclease family.

Its subcellular location is the cytoplasm. Could be a nuclease involved in processing of the 5'-end of pre-16S rRNA. The protein is Putative pre-16S rRNA nuclease of Streptococcus thermophilus (strain CNRZ 1066).